Here is a 147-residue protein sequence, read N- to C-terminus: Myoglobin (147 aa).

The region spanning 2-141 is the Globin domain; it reads ADFDMVLKCW…IITDMEADYK (140 aa). Residue His60 coordinates nitrite. His60 contributes to the O2 binding site. His89 is a binding site for heme b.

It belongs to the globin family. Monomeric.

The protein resides in the cytoplasm. Its subcellular location is the sarcoplasm. It catalyses the reaction Fe(III)-heme b-[protein] + nitric oxide + H2O = Fe(II)-heme b-[protein] + nitrite + 2 H(+). The catalysed reaction is H2O2 + AH2 = A + 2 H2O. Functionally, monomeric heme protein which primary function is to store oxygen and facilitate its diffusion within muscle tissues. Reversibly binds oxygen through a pentacoordinated heme iron and enables its timely and efficient release as needed during periods of heightened demand. Depending on the oxidative conditions of tissues and cells, and in addition to its ability to bind oxygen, it also has a nitrite reductase activity whereby it regulates the production of bioactive nitric oxide. Under stress conditions, like hypoxia and anoxia, it also protects cells against reactive oxygen species thanks to its pseudoperoxidase activity. This chain is Myoglobin (mb), found in Channichthys rhinoceratus (Unicorn icefish).